The following is a 490-amino-acid chain: tRNA-guanine(15) transglycosylase (490 aa).

Catalysis depends on Asp-90, which acts as the Nucleophile. Substrate is bound by residues Asp-125 and Ala-193. Residues Cys-276, Cys-278, and Cys-281 each contribute to the Zn(2+) site.

This sequence belongs to the archaeosine tRNA-ribosyltransferase family. Requires Zn(2+) as cofactor.

It carries out the reaction guanosine(15) in tRNA + 7-cyano-7-deazaguanine = 7-cyano-7-carbaguanosine(15) in tRNA + guanine. The protein operates within tRNA modification; archaeosine-tRNA biosynthesis. Functionally, exchanges the guanine residue with 7-cyano-7-deazaguanine (preQ0) at position 15 in the dihydrouridine loop (D-loop) of archaeal tRNAs. This Methanosarcina barkeri (strain Fusaro / DSM 804) protein is tRNA-guanine(15) transglycosylase.